The sequence spans 164 residues: Terminase, small subunit (164 aa).

The interval 1–35 (MEGLDINKLLDISDLPGIDGEEIKVYEPLQLVEVK) is helix-turn-helix (HTH). An interaction with gp17 region spans residues 1-35 (MEGLDINKLLDISDLPGIDGEEIKVYEPLQLVEVK). The segment at 36-114 (SNPQNRTPDL…KDMKDITSEQ (79 aa)) is oligomerization. The interaction with gp17 stretch occupies residues 115-164 (VGTKGAVPTGQMNIQNATVFMGSPTELMDEIGDAYEAQEAREKVINGTTD).

In terms of assembly, homooctamer. Interacts with the terminase large subunit gp17; the active complex is probably heterooligomeric.

The terminase small subunit binds to the packaging initiation site and regulates the ATPase activity of the terminase large subunit. The terminase lies at a unique vertex of the procapsid and is composed of two subunits, a small terminase subunit involved in viral DNA recognition (packaging 'pac' sequence), and a large terminase subunit possessing endonucleolytic and ATPase activities. Both terminase subunits heterooligomerize and are docked on the portal protein to form the packaging machine. The terminase large subunit exhibits endonuclease activity and cleaves the viral genome concatemer once the capsid is full (headful packaging). Once the capsid is packaged with the DNA, the terminase complex is substituted by neck proteins. This Enterobacteria phage T4 (Bacteriophage T4) protein is Terminase, small subunit (16).